Consider the following 186-residue polypeptide: Ribosome-recycling factor (186 aa).

The protein belongs to the RRF family.

Its subcellular location is the cytoplasm. Responsible for the release of ribosomes from messenger RNA at the termination of protein biosynthesis. May increase the efficiency of translation by recycling ribosomes from one round of translation to another. The polypeptide is Ribosome-recycling factor (Polaromonas sp. (strain JS666 / ATCC BAA-500)).